We begin with the raw amino-acid sequence, 429 residues long: Histidine--tRNA ligase (429 aa).

It belongs to the class-II aminoacyl-tRNA synthetase family. In terms of assembly, homodimer.

It localises to the cytoplasm. It catalyses the reaction tRNA(His) + L-histidine + ATP = L-histidyl-tRNA(His) + AMP + diphosphate + H(+). The protein is Histidine--tRNA ligase of Streptococcus pneumoniae (strain P1031).